The chain runs to 330 residues: 4-hydroxythreonine-4-phosphate dehydrogenase (330 aa).

Positions 134 and 135 each coordinate substrate. Positions 163, 208, and 263 each coordinate a divalent metal cation. Substrate is bound by residues lysine 271, asparagine 280, and arginine 289.

It belongs to the PdxA family. In terms of assembly, homodimer. Zn(2+) serves as cofactor. Requires Mg(2+) as cofactor. It depends on Co(2+) as a cofactor.

It localises to the cytoplasm. The enzyme catalyses 4-(phosphooxy)-L-threonine + NAD(+) = 3-amino-2-oxopropyl phosphate + CO2 + NADH. The protein operates within cofactor biosynthesis; pyridoxine 5'-phosphate biosynthesis; pyridoxine 5'-phosphate from D-erythrose 4-phosphate: step 4/5. Its function is as follows. Catalyzes the NAD(P)-dependent oxidation of 4-(phosphooxy)-L-threonine (HTP) into 2-amino-3-oxo-4-(phosphooxy)butyric acid which spontaneously decarboxylates to form 3-amino-2-oxopropyl phosphate (AHAP). This Methylococcus capsulatus (strain ATCC 33009 / NCIMB 11132 / Bath) protein is 4-hydroxythreonine-4-phosphate dehydrogenase.